The following is a 242-amino-acid chain: Pyr4-family terpene cyclase mfmH (242 aa).

The next 4 helical transmembrane spans lie at 25–45 (VQDG…ILYI), 55–75 (GMPL…GAAI), 80–100 (AQVV…YTTW), and 116–136 (NLGW…WAFL). N-linked (GlcNAc...) asparagine glycosylation occurs at Asn170. The next 2 helical transmembrane spans lie at 175–195 (SWGI…IFVW) and 211–231 (VTIF…FVYA).

Belongs to the paxB family.

Its subcellular location is the membrane. The protein operates within secondary metabolite biosynthesis; terpenoid biosynthesis. Functionally, terpene cyclase; part of the gene cluster that mediates the biosynthesis of the phthalide-terpenoid hybrid 11'-O-desmethylfendlerol. Within the pathway, mfmH catalyzes the last step and cyclizes the prenyl unit of 5-O-farnesylcyclopolic acid into a drimane-like structure to yield 11'-O-desmethylfendlerol. The biosynthesis of 11'-O-desmethylfendlerol begins with the NR-PKS mfmB that forms 3,5-dimethylorsellinic acid (DMOA), which is then transformed into the phthalide 5,7-dihydroxy-4-(hydroxymethyl)-6-methylphthalide by the cytochrome P450 monooxygenase mfmA and the hydrolase mfmC. Subsequently, the methyltransferase mfmE catalyzes 7-O-methylation to yield 5-hydroxy-4-(hydroxymethyl)-7-methoxy-6-methylphthalide, which undergoes C-3 hydroxylation by the cytochrome P450 monooxygenase mfmF. The resultant cyclopolic acid (2,5-dihydroxy-4-(hydroxymethyl)-7-methoxy-6-methylphthalide) is then farnesylated by the DMATS-type prenyltransferase mfmD to afford 5-O-farnesylcyclopolic acid. Finally, the Pyr4-family terpene cyclase mfmH cyclizes the farnesyl moiety of 5-O-farnesylcyclopolic acid into a drimane-like structure, thus completing the biosynthesis of 11'-O-desmethylfendlerol. This is Pyr4-family terpene cyclase mfmH from Annulohypoxylon moriforme (Filamentous fungus).